The following is a 398-amino-acid chain: Glutamyl-tRNA reductase (398 aa).

Substrate-binding positions include 45–48 (TCNR), S88, 93–95 (EDQ), and Q99. The Nucleophile role is filled by C46. 168–173 (GAGKMG) serves as a coordination point for NADP(+).

This sequence belongs to the glutamyl-tRNA reductase family. Homodimer.

The enzyme catalyses (S)-4-amino-5-oxopentanoate + tRNA(Glu) + NADP(+) = L-glutamyl-tRNA(Glu) + NADPH + H(+). Its pathway is porphyrin-containing compound metabolism; protoporphyrin-IX biosynthesis; 5-aminolevulinate from L-glutamyl-tRNA(Glu): step 1/2. Functionally, catalyzes the NADPH-dependent reduction of glutamyl-tRNA(Glu) to glutamate 1-semialdehyde (GSA). The polypeptide is Glutamyl-tRNA reductase (hemA) (Methanothermobacter marburgensis (strain ATCC BAA-927 / DSM 2133 / JCM 14651 / NBRC 100331 / OCM 82 / Marburg) (Methanobacterium thermoautotrophicum)).